The sequence spans 112 residues: Protein F-112 (112 aa).

In terms of biological role, essential for virus function. This Saccharolobus solfataricus (Sulfolobus solfataricus) protein is Protein F-112.